Consider the following 525-residue polypeptide: Peptide chain release factor 3 (525 aa).

Positions 11 to 279 (NNRRTFAIIS…AYLKYAPKPA (269 aa)) constitute a tr-type G domain. Residues 20–27 (SHPDAGKT), 88–92 (DTPGH), and 142–145 (NKLD) contribute to the GTP site.

The protein belongs to the TRAFAC class translation factor GTPase superfamily. Classic translation factor GTPase family. PrfC subfamily.

Its subcellular location is the cytoplasm. In terms of biological role, increases the formation of ribosomal termination complexes and stimulates activities of RF-1 and RF-2. It binds guanine nucleotides and has strong preference for UGA stop codons. It may interact directly with the ribosome. The stimulation of RF-1 and RF-2 is significantly reduced by GTP and GDP, but not by GMP. This chain is Peptide chain release factor 3, found in Ligilactobacillus salivarius (strain UCC118) (Lactobacillus salivarius).